We begin with the raw amino-acid sequence, 2029 residues long: Tyrosine-protein phosphatase Lar (2029 aa).

A signal peptide spans 1-32; sequence MGLQMTAARPIAALSLLVLSLLTWTHPTIVDA. Residues 33–1377 lie on the Extracellular side of the membrane; that stretch reads AHPPEIIRKP…SVNRNKDEPE (1345 aa). 3 Ig-like C2-type domains span residues 36–128, 140–224, and 234–316; these read PEII…ATLT, PVIT…KATN, and PTFS…VSVV. 2 cysteine pairs are disulfide-bonded: Cys57-Cys111 and Cys161-Cys209. 70 to 82 provides a ligand contact to heparin; it reads RKNGKKVSGTQSR. Residues Asn176, Asn253, and Asn298 are each glycosylated (N-linked (GlcNAc...) asparagine). Residues Cys256 and Cys301 are joined by a disulfide bond. 9 Fibronectin type-III domains span residues 324–414, 419–513, 517–608, 613–707, 711–810, 815–911, 912–1005, 1009–1102, and 1104–1206; these read APTD…TGET, APRN…AQQG, QPSN…TKQY, PPRN…TQED, DPQD…TPGG, PTVS…TPGG, PPSN…TERD, APMS…IKPE, and VPLN…TQMA. 5 N-linked (GlcNAc...) asparagine glycosylation sites follow: Asn553, Asn616, Asn666, Asn721, and Asn774. N-linked (GlcNAc...) asparagine glycosylation is found at Asn915 and Asn962. 2 N-linked (GlcNAc...) asparagine glycosylation sites follow: Asn1183 and Asn1304. The span at 1346-1358 shows a compositional bias: basic and acidic residues; sequence REAPPGERPHRPD. The segment at 1346–1369 is disordered; it reads REAPPGERPHRPDPNWPAEPEVSV. A helical transmembrane segment spans residues 1378-1402; the sequence is ILWVVLPLMVSTFIVSTALIVLCVV. Residues 1403 to 2029 lie on the Cytoplasmic side of the membrane; that stretch reads KRRRQPCKTP…YLGSFDNYTN (627 aa). Tyrosine-protein phosphatase domains are found at residues 1474 to 1729 and 1761 to 2020; these read FSQE…ILEA and MEVE…ALEY. Thr1572 is modified (phosphothreonine). Residues Asp1638, 1670 to 1676, and Gln1714 each bind substrate; that span reads CSAGVGR. Cys1670 acts as the Phosphocysteine intermediate in catalysis. Cys1961 (phosphocysteine intermediate) is an active-site residue.

Belongs to the protein-tyrosine phosphatase family. Receptor class 2A subfamily. As to expression, selectively expressed in a subset of axons and pioneer neurons in the embryo.

The protein localises to the membrane. It catalyses the reaction O-phospho-L-tyrosyl-[protein] + H2O = L-tyrosyl-[protein] + phosphate. Possible cell adhesion receptor. It possesses an intrinsic protein tyrosine phosphatase activity (PTPase). It controls motor axon guidance. In the developing eye, has a role in normal axonal targeting of the R7 photoreceptor, where it negatively regulates bdl. Inhibits bdl cell adhesion activity in vitro; this effect is independent of its PTPase function. The polypeptide is Tyrosine-protein phosphatase Lar (Lar) (Drosophila melanogaster (Fruit fly)).